The chain runs to 124 residues: Small ribosomal subunit protein uS13 (124 aa).

Basic residues predominate over residues 93–117; that stretch reads KNLPVRGQRTRTNARTRKGPRKTVA. The interval 93 to 124 is disordered; sequence KNLPVRGQRTRTNARTRKGPRKTVANKKIESK.

It belongs to the universal ribosomal protein uS13 family. As to quaternary structure, part of the 30S ribosomal subunit. Forms a loose heterodimer with protein S19. Forms two bridges to the 50S subunit in the 70S ribosome.

Functionally, located at the top of the head of the 30S subunit, it contacts several helices of the 16S rRNA. In the 70S ribosome it contacts the 23S rRNA (bridge B1a) and protein L5 of the 50S subunit (bridge B1b), connecting the 2 subunits; these bridges are implicated in subunit movement. Contacts the tRNAs in the A and P-sites. In Mycoplasma genitalium (strain ATCC 33530 / DSM 19775 / NCTC 10195 / G37) (Mycoplasmoides genitalium), this protein is Small ribosomal subunit protein uS13.